A 460-amino-acid chain; its full sequence is Cation efflux system protein CusC (460 aa).

The N-terminal stretch at M1 to G17 is a signal peptide. A lipid anchor (N-palmitoyl cysteine) is attached at C18. The S-diacylglycerol cysteine moiety is linked to residue C18.

Belongs to the outer membrane factor (OMF) (TC 1.B.17) family. As to quaternary structure, homotrimer. Component of the cus efflux system composed of CusA, CusB, CusC and CusF.

It is found in the cell outer membrane. In terms of biological role, forms pores that allow passive diffusion of cations across the outer membrane. Part of a cation efflux system that mediates resistance to copper and silver. In Escherichia coli O6:H1 (strain CFT073 / ATCC 700928 / UPEC), this protein is Cation efflux system protein CusC (cusC).